A 344-amino-acid polypeptide reads, in one-letter code: MITQRQNDILNLIVELFTQTHEPVGSKALQRTIDSSSATIRNDMAKLEKLGLLEKAHTSSGRMPSPAGFKYFVEHSLRLDSIDEQDIYHVIKTFDFEAFKLEDMLQKASHILAEMTGYTSVILDVEPARQRLTGFDVVQLSNHDALAVMTLDESKPVTVQFAIPRNFLTRDLIAFKAIVEERLLDSSVIDIHYKLRTEIPQIVQKYFVTTDNVLQLFDYVFSELFLETVFVAGKVNSLTYSDLSTYQFLDNEQQVAISLRQSLKEGEMASVQVADSQEAALADVSVLTHKFLIPYRGFGLLSLIGPIDMDYRRSVSLVNIIGKVLAAKLGDYYRYLNSNHYEVH.

Belongs to the HrcA family.

Functionally, negative regulator of class I heat shock genes (grpE-dnaK-dnaJ and groELS operons). Prevents heat-shock induction of these operons. The sequence is that of Heat-inducible transcription repressor HrcA from Streptococcus pyogenes serotype M6 (strain ATCC BAA-946 / MGAS10394).